We begin with the raw amino-acid sequence, 353 residues long: Phosphate acyltransferase (353 aa).

Belongs to the PlsX family. Homodimer. Probably interacts with PlsY.

The protein resides in the cytoplasm. It catalyses the reaction a fatty acyl-[ACP] + phosphate = an acyl phosphate + holo-[ACP]. It functions in the pathway lipid metabolism; phospholipid metabolism. Its function is as follows. Catalyzes the reversible formation of acyl-phosphate (acyl-PO(4)) from acyl-[acyl-carrier-protein] (acyl-ACP). This enzyme utilizes acyl-ACP as fatty acyl donor, but not acyl-CoA. The chain is Phosphate acyltransferase from Bradyrhizobium diazoefficiens (strain JCM 10833 / BCRC 13528 / IAM 13628 / NBRC 14792 / USDA 110).